The sequence spans 299 residues: Zinc finger protein 414 (299 aa).

Composition is skewed to polar residues over residues 1 to 20 (MEEP…SSSG) and 69 to 81 (DSCQ…TGVG). The tract at residues 1–98 (MEEPSRPSSD…PRRRPPPGKQ (98 aa)) is disordered. 2 consecutive C2H2-type zinc fingers follow at residues 99-123 (IPCS…LRTH) and 135-159 (FRCS…GKLH). The C2H2-type 3; degenerate zinc finger occupies 166-190 (FKCENCLLRFRTHRSLFKHLHVCID). 2 disordered regions span residues 193-228 (QNPA…PFPL) and 254-299 (PRLR…GACR). Positions 203-215 (LDKEPPVPERPPE) are enriched in basic and acidic residues. The span at 217-228 (DPSSSLGLPFPL) shows a compositional bias: low complexity.

This sequence belongs to the krueppel C2H2-type zinc-finger protein family.

Its subcellular location is the nucleus. Functionally, may be involved in transcriptional regulation. The protein is Zinc finger protein 414 (Znf414) of Mus musculus (Mouse).